A 475-amino-acid chain; its full sequence is MQETTVKRDGASPSDAGTPATTAQGLGKLYIRTFGCQMNEYDSDKMADVLRADQGLELTDNPEDADVILFNTCSVREKAQEKVFSDLGRVQHLKKQNPNLVIGVGGCVASQEGEAIVKRAPYVDVVFGPQTLHRLPDLIKRRRAQGVSQVDISFPEIEKFDALPPPRVDGATAFVSIMEGCSKYCSFCVVPYTRGEEVSRPFDDVLLEIADLADQGVKEVTLLGQNVNAYRGAMGDSGEIADFAMLLEYVHEIPGIERIRYTTSHPKEMTQRMVDAYARLPKLVSFLHLPVQAGSDRVLAAMKRGYTALEFKSVVRRLRAARPSLTLSSDFIVGFPGETEEDFQKTMKLIEDVGFDTSFSFVYSRRPGTPAADLHDDTPQDVKLRRLQQLQALINQQAAAIAQGMIGTRQRVLVEGPSRRDPNELMGRTENNRIVNFPGVPRLIGHMVDVVVTHAHTNSLRGRVAGIERDTSGAE.

The span at 1 to 10 (MQETTVKRDG) shows a compositional bias: basic and acidic residues. A disordered region spans residues 1-22 (MQETTVKRDGASPSDAGTPATT). In terms of domain architecture, MTTase N-terminal spans 27–144 (GKLYIRTFGC…LPDLIKRRRA (118 aa)). Residues Cys-36, Cys-73, Cys-107, Cys-181, Cys-185, and Cys-188 each coordinate [4Fe-4S] cluster. The 234-residue stretch at 167–400 (RVDGATAFVS…QALINQQAAA (234 aa)) folds into the Radical SAM core domain. The TRAM domain maps to 403 to 466 (QGMIGTRQRV…TNSLRGRVAG (64 aa)).

Belongs to the methylthiotransferase family. MiaB subfamily. Monomer. The cofactor is [4Fe-4S] cluster.

The protein resides in the cytoplasm. The catalysed reaction is N(6)-dimethylallyladenosine(37) in tRNA + (sulfur carrier)-SH + AH2 + 2 S-adenosyl-L-methionine = 2-methylsulfanyl-N(6)-dimethylallyladenosine(37) in tRNA + (sulfur carrier)-H + 5'-deoxyadenosine + L-methionine + A + S-adenosyl-L-homocysteine + 2 H(+). Catalyzes the methylthiolation of N6-(dimethylallyl)adenosine (i(6)A), leading to the formation of 2-methylthio-N6-(dimethylallyl)adenosine (ms(2)i(6)A) at position 37 in tRNAs that read codons beginning with uridine. The sequence is that of tRNA-2-methylthio-N(6)-dimethylallyladenosine synthase from Bordetella parapertussis (strain 12822 / ATCC BAA-587 / NCTC 13253).